We begin with the raw amino-acid sequence, 129 residues long: Fluoride-specific ion channel FluC (129 aa).

The next 4 helical transmembrane spans lie at 8-28 (ILLVGVGGFLGSVARYLVALW), 34-54 (AVFPFATLTVNLLGSFLIGFI), 70-90 (IFLVTGFCGGFTTFSSYMIEH), and 102-122 (AALYLFGSLIGGFIALYLGII). The Na(+) site is built by Gly78 and Thr81.

It belongs to the fluoride channel Fluc/FEX (TC 1.A.43) family.

Its subcellular location is the cell inner membrane. The catalysed reaction is fluoride(in) = fluoride(out). Na(+) is not transported, but it plays an essential structural role and its presence is essential for fluoride channel function. Functionally, fluoride-specific ion channel. Important for reducing fluoride concentration in the cell, thus reducing its toxicity. The chain is Fluoride-specific ion channel FluC from Chlorobium chlorochromatii (strain CaD3).